Consider the following 882-residue polypeptide: DNA mismatch repair protein MutS (882 aa).

Position 656–663 (656–663 (GPNASGKS)) interacts with ATP.

The protein belongs to the DNA mismatch repair MutS family.

Its function is as follows. This protein is involved in the repair of mismatches in DNA. It is possible that it carries out the mismatch recognition step. This protein has a weak ATPase activity. The sequence is that of DNA mismatch repair protein MutS from Synechococcus elongatus (strain ATCC 33912 / PCC 7942 / FACHB-805) (Anacystis nidulans R2).